The chain runs to 91 residues: DNA/RNA-binding protein Alba (91 aa).

It belongs to the histone-like Alba family.

It localises to the cytoplasm. It is found in the chromosome. In terms of biological role, binds double-stranded DNA tightly but without sequence specificity. Involved in DNA compaction. In Methanoculleus marisnigri (strain ATCC 35101 / DSM 1498 / JR1), this protein is DNA/RNA-binding protein Alba.